The sequence spans 2605 residues: Protein ABERRANT POLLEN TRANSMISSION 1 (2605 aa).

The first 43 residues, 1 to 43 (MMLGLVQLLVGFVVAWEAVELVLRHGLLLSVFKLAILAALAAA), serve as a signal peptide directing secretion. The interval 137 to 158 (STNKKKPAPRKPISTTTAKAKG) is disordered. Residues Asn-232, Asn-320, Asn-348, Asn-516, Asn-587, Asn-628, Asn-696, Asn-779, Asn-1171, Asn-1318, and Asn-1459 are each glycosylated (N-linked (GlcNAc...) asparagine). The disordered stretch occupies residues 305–326 (SASTVAEQKDEPSVDNKSAARS). Over residues 311 to 326 (EQKDEPSVDNKSAARS) the composition is skewed to basic and acidic residues. Residues 1761-1818 (MSKDGALSSVSSTSQPSEPQQIKSSESPPSNGSGKPDLTSSSENALKRSNNSDSEEEG) are disordered. The segment covering 1768 to 1781 (SSVSSTSQPSEPQQ) has biased composition (low complexity). Over residues 1782–1812 (IKSSESPPSNGSGKPDLTSSSENALKRSNNS) the composition is skewed to polar residues. Asn-1791, Asn-1810, Asn-2003, Asn-2280, and Asn-2291 each carry an N-linked (GlcNAc...) asparagine glycan. Disordered regions lie at residues 2269 to 2312 (VSTT…SSFD) and 2332 to 2361 (EGQT…REDK). Residues 2281 to 2300 (TSVAETNSPNNQSSKETTFA) are compositionally biased toward polar residues. Composition is skewed to basic and acidic residues over residues 2303-2312 (PELRRTSSFD) and 2343-2361 (DAAK…REDK). Residues Asn-2468 and Asn-2564 are each glycosylated (N-linked (GlcNAc...) asparagine). The interval 2574 to 2605 (TELEVAELPPRAPGYNTDSSSDSSSAETSPKD) is disordered.

This sequence belongs to the SABRE family. In terms of tissue distribution, mature pollen-specific.

The protein resides in the secreted. It localises to the golgi apparatus. In terms of biological role, may be involved in membrane trafficking. Required for tip growth in pollen tubes and root hairs. In Zea mays (Maize), this protein is Protein ABERRANT POLLEN TRANSMISSION 1.